Here is a 798-residue protein sequence, read N- to C-terminus: Elongation factor G, mitochondrial (798 aa).

The transit peptide at 1 to 24 (MRVIRAAAALNSSCAASSRQGARY) directs the protein to the mitochondrion. A tr-type G domain is found at 97 to 383 (SMVRNIGIAA…AVCDYLPNPG (287 aa)). GTP-binding positions include 106-113 (AHIDSGKT), 181-185 (DTPGH), and 235-238 (NKMD).

It belongs to the TRAFAC class translation factor GTPase superfamily. Classic translation factor GTPase family. EF-G/EF-2 subfamily.

It localises to the mitochondrion. Its pathway is protein biosynthesis; polypeptide chain elongation. Its function is as follows. Mitochondrial GTPase that catalyzes the GTP-dependent ribosomal translocation step during translation elongation. During this step, the ribosome changes from the pre-translocational (PRE) to the post-translocational (POST) state as the newly formed A-site-bound peptidyl-tRNA and P-site-bound deacylated tRNA move to the P and E sites, respectively. Catalyzes the coordinated movement of the two tRNA molecules, the mRNA and conformational changes in the ribosome. The chain is Elongation factor G, mitochondrial from Chaetomium globosum (strain ATCC 6205 / CBS 148.51 / DSM 1962 / NBRC 6347 / NRRL 1970) (Soil fungus).